The primary structure comprises 223 residues: Putative NAD(P)H nitroreductase SAB2397c (223 aa).

Belongs to the nitroreductase family. It depends on FMN as a cofactor.

This Staphylococcus aureus (strain bovine RF122 / ET3-1) protein is Putative NAD(P)H nitroreductase SAB2397c.